A 401-amino-acid polypeptide reads, in one-letter code: MTLPKIKHVRAWFTGGATAEQGAGGGDYHDQGANHWIDDHIATPMSKYKEYEQSRQSFGINVLGTLIVEVEADNGQTGFAVSTAGEMGCFIVEKHLNRFIEGKCVSDIKLIHDQMLNATLYYAGSGGLVMNTLSCVDLALWDLFGKVVGLPVYKLLGGAVRDEIQFYATGARPDLAQEMGFIGGKMPTHWGPHDGDAGIRKDVAMVADMREKCGPDFWLMLDCWMSQDVNYATKLAHACAPYNLKWIEECLPPQQYEGYRELKRQAPAGMMVTSGEHHGTLQSFRTLSETGIDIMQPDVGWCGGLTTLVEIAAIAKARGQLVVPHGSSVYSHHAVITFTNTPFSEFLMTSPDCATLRPQFDPILLGEPVPERGRIHKSVLDKPGFGVELNRDCNLKRPYQH.

2 residues coordinate substrate: H29 and R55. Residues D222, E248, and E276 each contribute to the Mg(2+) site. H325 acts as the Proton acceptor in catalysis. E345 provides a ligand contact to substrate.

Belongs to the mandelate racemase/muconate lactonizing enzyme family. RhamD subfamily. As to quaternary structure, homooctamer; tetramer of dimers. Mg(2+) is required as a cofactor.

It catalyses the reaction L-rhamnonate = 2-dehydro-3-deoxy-L-rhamnonate + H2O. In terms of biological role, catalyzes the dehydration of L-rhamnonate to 2-keto-3-deoxy-L-rhamnonate (KDR). The sequence is that of L-rhamnonate dehydratase from Klebsiella pneumoniae (strain 342).